A 103-amino-acid polypeptide reads, in one-letter code: Zinc-containing ferredoxin (103 aa).

The interval 1–36 is N-terminal extension; sequence GIDPNYRTSKPVVGDHSGHKIYGPVESPKVLGVHGT. Histidine 19 is a binding site for Zn(2+). N6-methyllysine is present on lysine 29. Histidine 34 provides a ligand contact to Zn(2+). 4Fe-4S ferredoxin-type domains are found at residues 35–65 and 74–103; these read GTIVGVDFDLCIADGSCITACPVNVFQWYET and KADPVNEQACIFCMACVNVCPVAAIDVKPP. Residues cysteine 45 and cysteine 51 each contribute to the [3Fe-4S] cluster site. Cysteine 55 provides a ligand contact to [4Fe-4S] cluster. Aspartate 76 is a binding site for Zn(2+). Cysteine 83, cysteine 86, and cysteine 89 together coordinate [4Fe-4S] cluster. Cysteine 93 serves as a coordination point for [3Fe-4S] cluster.

[3Fe-4S] cluster is required as a cofactor. The cofactor is [4Fe-4S] cluster. Zn(2+) serves as cofactor.

Its function is as follows. Ferredoxins are iron-sulfur proteins that transfer electrons in a wide variety of metabolic reactions. The polypeptide is Zinc-containing ferredoxin (zfx) (Sulfolobus acidocaldarius (strain ATCC 33909 / DSM 639 / JCM 8929 / NBRC 15157 / NCIMB 11770)).